The sequence spans 431 residues: Adenylosuccinate lyase (431 aa).

N(6)-(1,2-dicarboxyethyl)-AMP contacts are provided by residues 4–5 (RY), 67–69 (RHD), and 93–94 (TS). The active-site Proton donor/acceptor is the H141. Q212 is a N(6)-(1,2-dicarboxyethyl)-AMP binding site. S262 acts as the Proton donor/acceptor in catalysis. N(6)-(1,2-dicarboxyethyl)-AMP-binding positions include S263, 268–270 (KRN), N276, and 307–311 (SAERI).

This sequence belongs to the lyase 1 family. Adenylosuccinate lyase subfamily. In terms of assembly, homotetramer. Residues from neighboring subunits contribute catalytic and substrate-binding residues to each active site.

The enzyme catalyses N(6)-(1,2-dicarboxyethyl)-AMP = fumarate + AMP. It carries out the reaction (2S)-2-[5-amino-1-(5-phospho-beta-D-ribosyl)imidazole-4-carboxamido]succinate = 5-amino-1-(5-phospho-beta-D-ribosyl)imidazole-4-carboxamide + fumarate. Its pathway is purine metabolism; AMP biosynthesis via de novo pathway; AMP from IMP: step 2/2. The protein operates within purine metabolism; IMP biosynthesis via de novo pathway; 5-amino-1-(5-phospho-D-ribosyl)imidazole-4-carboxamide from 5-amino-1-(5-phospho-D-ribosyl)imidazole-4-carboxylate: step 2/2. Catalyzes two reactions in de novo purine nucleotide biosynthesis. Catalyzes the breakdown of 5-aminoimidazole- (N-succinylocarboxamide) ribotide (SAICAR or 2-[5-amino-1-(5-phospho-beta-D-ribosyl)imidazole-4-carboxamido]succinate) to 5-aminoimidazole-4-carboxamide ribotide (AICAR or 5-amino-1-(5-phospho-beta-D-ribosyl)imidazole-4-carboxamide) and fumarate, and of adenylosuccinate (ADS or N(6)-(1,2-dicarboxyethyl)-AMP) to adenosine monophosphate (AMP) and fumarate. Influences the affinity of glutamyl--tRNA ligase for its substrates and increases its thermostability. The protein is Adenylosuccinate lyase (purB) of Bacillus subtilis (strain 168).